A 357-amino-acid polypeptide reads, in one-letter code: Peptide chain release factor 1 (357 aa).

Residue glutamine 235 is modified to N5-methylglutamine.

It belongs to the prokaryotic/mitochondrial release factor family. In terms of processing, methylated by PrmC. Methylation increases the termination efficiency of RF1.

The protein resides in the cytoplasm. Peptide chain release factor 1 directs the termination of translation in response to the peptide chain termination codons UAG and UAA. The chain is Peptide chain release factor 1 from Alkaliphilus metalliredigens (strain QYMF).